The chain runs to 829 residues: Cap-specific mRNA (nucleoside-2'-O-)-methyltransferase 1 (829 aa).

Positions 1 to 68 are disordered; sequence MKRAAQASDE…DSQNSQGSMA (68 aa). The Bipartite nuclear localization signal signature appears at 2–16; that stretch reads KRAAQASDEPLKKRK. The span at 31-44 shows a compositional bias: low complexity; that stretch reads QRTTSQDSSQSESL. Over residues 55–68 the composition is skewed to polar residues; it reads SRPSDSQNSQGSMA. The G-patch domain maps to 79–125; it reads YNNVSQKLMAKMGFREGEGLGKYGQGRKEIVEASTQRGRRGLGLMLK. Substrate contacts are provided by residues 195–199 and Arg-210; that span reads KTVFD. The 220-residue stretch at 223 to 442 folds into the RrmJ-type SAM-dependent 2'-O-MTase domain; the sequence is FFLNRAAMKM…ERYVVCKGLK (220 aa). Asn-226 is an S-adenosyl-L-methionine binding site. Lys-231 is an active-site residue. S-adenosyl-L-methionine-binding positions include 269–275 and 327–328; these read CAGPGGF and DI. The active site involves Asp-356. 366–368 is a substrate binding site; that stretch reads NLQ. Residue Lys-396 is the Proton acceptor of the active site. Asn-431 is a binding site for substrate. The WW domain occupies 745–779; that stretch reads KTVNDPWTMAFSKSSKRKFFYNKQTKESTYDLPAT.

The protein resides in the nucleus. The enzyme catalyses a 5'-end (N(7)-methyl 5'-triphosphoguanosine)-ribonucleoside in mRNA + S-adenosyl-L-methionine = a 5'-end (N(7)-methyl 5'-triphosphoguanosine)-(2'-O-methyl-ribonucleoside) in mRNA + S-adenosyl-L-homocysteine + H(+). Functionally, S-adenosyl-L-methionine-dependent methyltransferase that mediates mRNA cap1 2'-O-ribose methylation to the 5'-cap structure of mRNAs. Methylates the ribose of the first nucleotide of a m(7)GpppG-capped mRNA and small nuclear RNA (snRNA) to produce m(7)GpppRm (cap1). Displays a preference for cap0 transcripts. Cap1 modification is linked to higher levels of translation. May be involved in the interferon response pathway. The sequence is that of Cap-specific mRNA (nucleoside-2'-O-)-methyltransferase 1 (cmtr1) from Danio rerio (Zebrafish).